Here is a 268-residue protein sequence, read N- to C-terminus: Mitochondrial distribution and morphology protein 12 (268 aa).

In terms of domain architecture, SMP-LTD spans 1-266 (MSIDLEWCKL…FPNFHTIVMA (266 aa)). A disordered region spans residues 66 to 136 (EDDEEGSDRG…PPPAENPHPN (71 aa)). Residues 102-111 (PATNVTSSLD) show a composition bias toward polar residues. The span at 112 to 121 (TRSDQPDDQK) shows a compositional bias: basic and acidic residues.

The protein belongs to the MDM12 family. Component of the ER-mitochondria encounter structure (ERMES) or MDM complex, composed of MMM1, MDM10, MDM12 and MDM34. An MMM1 homodimer associates with one molecule of MDM12 on each side in a pairwise head-to-tail manner, and the SMP-LTD domains of MMM1 and MDM12 generate a continuous hydrophobic tunnel for phospholipid trafficking.

The protein localises to the mitochondrion outer membrane. The protein resides in the endoplasmic reticulum membrane. In terms of biological role, component of the ERMES/MDM complex, which serves as a molecular tether to connect the endoplasmic reticulum (ER) and mitochondria. Components of this complex are involved in the control of mitochondrial shape and protein biogenesis, and function in nonvesicular lipid trafficking between the ER and mitochondria. MDM12 is required for the interaction of the ER-resident membrane protein MMM1 and the outer mitochondrial membrane-resident beta-barrel protein MDM10. The MDM12-MMM1 subcomplex functions in the major beta-barrel assembly pathway that is responsible for biogenesis of all mitochondrial outer membrane beta-barrel proteins, and acts in a late step after the SAM complex. The MDM10-MDM12-MMM1 subcomplex further acts in the TOM40-specific pathway after the action of the MDM12-MMM1 complex. Essential for establishing and maintaining the structure of mitochondria and maintenance of mtDNA nucleoids. This Laccaria bicolor (strain S238N-H82 / ATCC MYA-4686) (Bicoloured deceiver) protein is Mitochondrial distribution and morphology protein 12.